Consider the following 136-residue polypeptide: uncharacterized protein (136 aa).

A signal peptide spans 1 to 19 (MMTAAKRLGLYSALRACSA). A helical membrane pass occupies residues 75–97 (FWFSHTCLVFGSNTILFASLNSF).

The protein localises to the membrane. This is an uncharacterized protein from Saccharomyces cerevisiae (strain ATCC 204508 / S288c) (Baker's yeast).